The following is a 385-amino-acid chain: MYADAPSDSAPPEAVLPMDEAAMRAVDRATAALRRGEAVAIETADGSVGAAVSVESVAIDAVQRLVQLTGAAPVLAVTRRRATVLKLMGEGTGVVALSLPRCLTADEAHALADPEHRPDGDMPDGLTATAMDPGSRETAAVDLARLARLLPAAIVAPATDHTGSAAEWAAEHDLLLVRARDIADYRVHVVRTLRRVAEARVPLSGAENTSIAAFRPIDGGPEHLAIIVGNPVAGEPVLARLHSECFTGDLLAGLRCDCGQQLRGAIAEIARHGSGVLLYLAQEGRGIGLVNKLRAYRIQDRGFDTVDANEILGFEADERVYLPAAEMLRQLGFTAVRLMTNNPEKLRQLARCGIEVVERVPHIFPANGHNEGYLRTKAERSGHMF.

Residues 1-189 form a DHBP synthase-like region; sequence MYADAPSDSA…RDIADYRVHV (189 aa). The GTP cyclohydrolase II stretch occupies residues 190-385; it reads VRTLRRVAEA…TKAERSGHMF (196 aa). 240–244 contacts GTP; it reads RLHSE. Zn(2+) is bound by residues C245, C256, and C258. GTP is bound by residues Q261, 283–285, and T305; that span reads EGR. The Proton acceptor role is filled by D317. R319 functions as the Nucleophile in the catalytic mechanism. GTP contacts are provided by T340 and K345.

It in the N-terminal section; belongs to the DHBP synthase family. The protein in the C-terminal section; belongs to the GTP cyclohydrolase II family. The cofactor is Zn(2+).

It carries out the reaction GTP + 4 H2O = 2,5-diamino-6-hydroxy-4-(5-phosphoribosylamino)-pyrimidine + formate + 2 phosphate + 3 H(+). Its pathway is cofactor biosynthesis; riboflavin biosynthesis; 5-amino-6-(D-ribitylamino)uracil from GTP: step 1/4. In terms of biological role, catalyzes the conversion of GTP to 2,5-diamino-6-ribosylamino-4(3H)-pyrimidinone 5'-phosphate (DARP), formate and pyrophosphate. The chain is GTP cyclohydrolase-2 (ribA) from Azospirillum brasilense.